A 90-amino-acid chain; its full sequence is UPF0298 protein YlbG (90 aa).

Belongs to the UPF0298 family.

It localises to the cytoplasm. The polypeptide is UPF0298 protein YlbG (ylbG) (Bacillus subtilis (strain 168)).